Consider the following 207-residue polypeptide: Large ribosomal subunit protein uL4 (207 aa).

Residues 45-78 (RQGTHKTKNRAEVSGGGRKPWRQKGTGRARQGSI) form a disordered region.

This sequence belongs to the universal ribosomal protein uL4 family. Part of the 50S ribosomal subunit.

Functionally, one of the primary rRNA binding proteins, this protein initially binds near the 5'-end of the 23S rRNA. It is important during the early stages of 50S assembly. It makes multiple contacts with different domains of the 23S rRNA in the assembled 50S subunit and ribosome. Forms part of the polypeptide exit tunnel. The sequence is that of Large ribosomal subunit protein uL4 from Geobacillus sp. (strain WCH70).